The sequence spans 143 residues: Endoribonuclease YbeY (143 aa).

Positions 109, 113, and 119 each coordinate Zn(2+).

This sequence belongs to the endoribonuclease YbeY family. Requires Zn(2+) as cofactor.

The protein localises to the cytoplasm. Functionally, single strand-specific metallo-endoribonuclease involved in late-stage 70S ribosome quality control and in maturation of the 3' terminus of the 16S rRNA. The protein is Endoribonuclease YbeY of Christiangramia forsetii (strain DSM 17595 / CGMCC 1.15422 / KT0803) (Gramella forsetii).